The primary structure comprises 178 residues: CDP-archaeol synthase (178 aa).

5 helical membrane-spanning segments follow: residues 7-27, 56-76, 91-111, 125-145, and 149-169; these read LFVSFWFILPAYTANAMACIF, FFGVFFGIVTAIIQYLVSNLG, VIIGFLLSFGALFGDMFGSFL, VLDQITFIVFALIFVSYYYLV, and ISITLLILSPVVHILSNIIAY.

Belongs to the CDP-archaeol synthase family. The cofactor is Mg(2+).

It is found in the cell membrane. It carries out the reaction 2,3-bis-O-(geranylgeranyl)-sn-glycerol 1-phosphate + CTP + H(+) = CDP-2,3-bis-O-(geranylgeranyl)-sn-glycerol + diphosphate. The protein operates within membrane lipid metabolism; glycerophospholipid metabolism. Its function is as follows. Catalyzes the formation of CDP-2,3-bis-(O-geranylgeranyl)-sn-glycerol (CDP-archaeol) from 2,3-bis-(O-geranylgeranyl)-sn-glycerol 1-phosphate (DGGGP) and CTP. This reaction is the third ether-bond-formation step in the biosynthesis of archaeal membrane lipids. The polypeptide is CDP-archaeol synthase (Methanococcus vannielii (strain ATCC 35089 / DSM 1224 / JCM 13029 / OCM 148 / SB)).